A 1585-amino-acid chain; its full sequence is Sterol 3-beta-glucosyltransferase (1585 aa).

A compositionally biased stretch (pro residues) spans 1-18 (MSPPISPTPPPLQPPFPP). Disordered stretches follow at residues 1-151 (MSPP…ESSF), 177-225 (PWEE…PTHT), and 249-279 (YQYA…LPKG). Polar residues-rich tracts occupy residues 65–92 (DQAT…NAIT), 105–123 (DAQT…STHE), and 132–148 (PRTS…QMAE). The span at 178-194 (WEEDDDSDDGEDDDEFI) shows a compositional bias: acidic residues. Residues 255 to 273 (ETSSRRTSAAGSESSSEGE) show a composition bias toward low complexity. The region spanning 387–555 (ERLMEVFGLE…EAIVDVEKSP (169 aa)) is the GRAM 1 domain. The PH domain occupies 438–530 (LLVKSGPLHK…WVKAIQKVMF (93 aa)). Disordered stretches follow at residues 625 to 645 (TSHA…LGMA) and 666 to 852 (DGEP…GSES). The span at 670–689 (LEEHSQGPHHNDEDASHLPH) shows a compositional bias: basic and acidic residues. 3 stretches are compositionally biased toward polar residues: residues 760–785 (TDSS…QASV), 806–817 (NKPSVVDSNSAE), and 827–840 (SWTS…QMVK). Residues 862–933 (RKFRTFFALS…RDLYGLKAQK (72 aa)) enclose the GRAM 2 domain. Residues Ser1043, Arg1044, Asp1046, Ile1358, His1360, His1373, Gly1377, Thr1378, Asp1397, and Gln1398 each contribute to the UDP-alpha-D-glucose site. The interval 1499–1552 (NRVRSRSRSRSRSSQGRFSPRRHTVDDDGWSVVSGGSRSRSGSASAVTSPERRP) is disordered. The segment covering 1529-1545 (SVVSGGSRSRSGSASAV) has biased composition (low complexity).

Belongs to the glycosyltransferase 28 family.

Its subcellular location is the cytoplasm. It is found in the membrane. It catalyses the reaction a sterol + UDP-alpha-D-glucose = a sterol 3-beta-D-glucoside + UDP + H(+). The enzyme catalyses ergosterol + UDP-alpha-D-glucose = ergosteryl 3-beta-D-glucoside + UDP + H(+). Sterol glycosyltransferase responsible for the glycosylation of ergosterol to form ergosterol-glucoside. The sequence is that of Sterol 3-beta-glucosyltransferase from Cryptococcus neoformans var. neoformans serotype D (strain B-3501A) (Filobasidiella neoformans).